The primary structure comprises 122 residues: MIDKLKKSVSKIRRAERSRFKLKKSGSRPRLVFNKSNKYLSCQIVDDIQGVTLAYATTSEKTFSSEGKSKKDVGAAKVLGKLIAERGSQKGVKQVMLDRSGMIFHGRIAAFAEGAREAGLEF.

This sequence belongs to the universal ribosomal protein uL18 family. As to quaternary structure, part of the 50S ribosomal subunit; part of the 5S rRNA/L5/L18/L25 subcomplex. Contacts the 5S and 23S rRNAs.

Functionally, this is one of the proteins that bind and probably mediate the attachment of the 5S RNA into the large ribosomal subunit, where it forms part of the central protuberance. The polypeptide is Large ribosomal subunit protein uL18 (Leptospira borgpetersenii serovar Hardjo-bovis (strain JB197)).